Consider the following 1906-residue polypeptide: Myosin light chain kinase, smooth muscle (1906 aa).

Ig-like C2-type domains follow at residues 28-117 (PAFT…VELT) and 156-244 (PKFA…AELT). Disordered stretches follow at residues 127-157 (SLPS…SPPK) and 309-453 (ETFY…SKVS). Over residues 309–321 (ETFYTSREAKDGK) the composition is skewed to basic and acidic residues. Polar residues-rich tracts occupy residues 345–354 (LQKTSSTITL) and 384–402 (PLMT…QVSP). The segment covering 403–424 (RSRETENRAGVRKSVKEEKREP) has biased composition (basic and acidic residues). Ig-like C2-type domains are found at residues 429–517 (PQFE…WLLT), 521–613 (PKVE…AQVT), 637–725 (PIFL…ATLT), and 735–830 (PWFI…SSAS). One copy of the IIA-1 repeat lies at 660–676 (VSANPCPEIIWLHNGKE). Residues 660-1833 (VSANPCPEII…EVMWYKDDQP (1174 aa)) form a 4 X repeats, motif IIA region. An IIB-1 repeat occupies 693–708 (SLYIQEVFPEDTGKYT). The 5 X repeats, motif IIB stretch occupies residues 693-1866 (SLYIQEVFPE…VCGDDDAKYT (1174 aa)). One copy of the IIA-2 repeat lies at 758–774 (IAGDPFPTVHWFKDGQE). The IIB-2 repeat unit spans residues 791-807 (TLILRNVQSRHAGQYEI). Disordered regions lie at residues 831 to 881 (RAEM…QEDV) and 947 to 1086 (PKTL…APSF). Basic and acidic residues-rich tracts occupy residues 833–850 (EMLR…RRDG) and 867–881 (SSSE…QEDV). The III-1 repeat unit spans residues 970–987 (AKKGTPKTPLPEKVPPPK). The interval 970–1226 (AKKGTPKTPL…TPPKAATPPQ (257 aa)) is 4 X repeats, motif III. A compositionally biased stretch (pro residues) spans 977 to 988 (TPLPEKVPPPKP). An III-2 repeat occupies 999 to 1016 (AKKKPPAENGSASTPAPN). The segment covering 1039 to 1051 (VKKEEKNDRKCEH) has biased composition (basic and acidic residues). The stretch at 1061 to 1078 (IGKKAENKPAASKPTPPP) is one III-3 repeat. 2 Ig-like C2-type domains span residues 1084–1172 (PSFT…CKVL) and 1225–1313 (PQIT…VNLT). Residues 1107 to 1123 (ISSDPPASVSWTLDSKA) form an IIA-3 repeat. The stretch at 1140–1156 (SLTIEKVMPEDGGEYKC) is one IIB-3 repeat. The disordered stretch occupies residues 1180–1227 (KAAKPAEKKTKKPKTTLPPVLSTESSEATVKKKPAPKTPPKAATPPQI). One copy of the III-4 repeat lies at 1209-1226 (VKKKPAPKTPPKAATPPQ). The IIB-4 repeat unit spans residues 1281-1297 (KLTISSTKQEHCGCYTL). The interval 1317–1364 (KPDPPAGTPCASDIRSSSLTLSWYGSSYDGGSAVQSYTVEIWNSVDNK) is motif IA. The Fibronectin type-III domain maps to 1321-1414 (PAGTPCASDI…ESEVVKVGEK (94 aa)). The motif IB stretch occupies residues 1385-1402 (REYKFRVRAANVYGISEP). The tract at residues 1414–1433 (KQEEELKEEEAELSDDEGKE) is disordered. The span at 1415-1432 (QEEELKEEEAELSDDEGK) shows a compositional bias: acidic residues. In terms of domain architecture, Protein kinase spans 1453–1708 (YNIEERLGSG…CTQCLQHPWL (256 aa)). Residues 1459 to 1467 (LGSGKFGQV) and Lys-1482 each bind ATP. The Proton acceptor role is filled by Asp-1574. Residues 1700 to 1763 (TQCLQHPWLQ…SGMSGRKASG (64 aa)) form a calmodulin-binding region. Positions 1716–1728 (EAKKLSKDRMKKY) are calmodulin autoinhibition (AM13) region. A calmodulin recognition (RS20) region region spans residues 1730-1749 (ARRKWQKTGHAVRAIGRLSS). Ser-1762 is modified (phosphoserine; by PKG). Ser-1768 carries the post-translational modification Phosphoserine; by MAPK. The Ig-like C2-type 9 domain occupies 1794 to 1885 (PYFTKTILDM…ATCTAELLVE (92 aa)). An IIA-4 repeat occupies 1817 to 1833 (IEGYPDPEVMWYKDDQP). Residues 1851 to 1866 (SLTISEVCGDDDAKYT) form an IIB-5 repeat. The tract at residues 1885 to 1906 (ETMGKEGEGEGEGEEDEEEEEE) is disordered. The segment covering 1893–1906 (GEGEGEEDEEEEEE) has biased composition (acidic residues).

Belongs to the protein kinase superfamily. CAMK Ser/Thr protein kinase family. As to quaternary structure, all isoforms including Telokin bind calmodulin. The cofactor is Mg(2+). Ca(2+) serves as cofactor. In terms of processing, the C-terminus is deglutamylated, leading to the formation of Myosin light chain kinase, smooth muscle, deglutamylated form. The C-terminus is variable, with one to five C-terminal glutamyl residues being removed producing five forms differring in their number of C-terminal glutamyl residues. Post-translationally, acetylated. Phosphorylation of telokin by PKG has no significant effect on its myosin binding activity, but promotes translocation to the membrane. Isoform telokin is expressed in gizzard, heart, lung, intestine, and skeletal muscle although the levels of the expression in the latter were much less than that in the gizzard.

It is found in the cytoplasm. The protein resides in the cytosol. Its subcellular location is the membrane. The enzyme catalyses L-seryl-[myosin light chain] + ATP = O-phospho-L-seryl-[myosin light chain] + ADP + H(+). It carries out the reaction L-threonyl-[myosin light chain] + ATP = O-phospho-L-threonyl-[myosin light chain] + ADP + H(+). With respect to regulation, activated by phosphorylation on Tyr-478. Isoforms which lack this tyrosine residue are not regulated in this way. All catalytically active isoforms require binding to calcium and calmodulin for activation. Functionally, phosphorylates a specific serine in the N-terminus of a myosin light chain, which leads to the formation of calmodulin/MLCK signal transduction complexes which allow selective transduction of calcium signals. The sequence is that of Myosin light chain kinase, smooth muscle (Mylk) from Gallus gallus (Chicken).